The following is a 1465-amino-acid chain: DNA polymerase alpha catalytic subunit (1465 aa).

Disordered stretches follow at residues 20-39 and 105-135; these read GSFAASRARREKKSKKGRQE and LEDDALDTCGKGSDGKAHRKDRKDVKKPSVT. Basic residues predominate over residues 26-35; sequence RARREKKSKK. Thr-180 is modified (phosphothreonine). Ser-192 and Ser-215 each carry phosphoserine. Lys-230 is subject to N6-acetyllysine. The disordered stretch occupies residues 261–297; that stretch reads DESMDTEKVDEKPVTAKTWDQETEPVERVEHEADPER. 2 stretches are compositionally biased toward basic and acidic residues: residues 265–274 and 285–297; these read DTEKVDEKPV and PVERVEHEADPER. A DNA-binding region spans residues 654–719; the sequence is RINECKVPYW…YHLSELVQQI (66 aa). Lys-974 is subject to N6-succinyllysine. A DNA-binding region spans residues 1249-1380; that stretch reads QFRVHQYHKD…NGPLCPVCMK (132 aa). Zn(2+) is bound by residues Cys-1287, Cys-1290, Cys-1314, Cys-1319, Cys-1352, Cys-1357, Cys-1375, and Cys-1378. A CysA-type zinc finger spans residues 1287-1317; that stretch reads CPSCGTENIYDNVFEGSGLDMEPSLYRCSNV. Positions 1352–1378 match the CysB motif motif; it reads CEEPTCCSRLRRLPLHFSRNGPLCPVC.

This sequence belongs to the DNA polymerase type-B family. As to quaternary structure, component of the alpha DNA polymerase complex (also known as the alpha DNA polymerase-primase complex) consisting of four subunits: the catalytic subunit POLA1, the regulatory subunit POLA2, and the primase complex subunits PRIM1 and PRIM2 respectively. Within the complex, POLA1 directly interacts with PRIM2. Interacts with PARP1; this interaction functions as part of the control of replication fork progression. Interacts with MCM10 and WDHD1; these interactions recruit the polymerase alpha complex to the pre-replicative complex bound to DNA. Interacts with RPA1; this interaction stabilizes the replicative complex and reduces the misincorporation rate of DNA polymerase alpha by acting as a fidelity clamp. In terms of tissue distribution, expressed in those zones containing proliferating cells in the developing embryonic neocortex, as well as in the lateral and medial ganglionic eminences. After birth, expressed in cells that remain proliferating in the ventricular and subventricular zone of the striatum.

It localises to the nucleus. Its subcellular location is the cytoplasm. The protein localises to the cytosol. The catalysed reaction is DNA(n) + a 2'-deoxyribonucleoside 5'-triphosphate = DNA(n+1) + diphosphate. Functionally, catalytic subunit of the DNA polymerase alpha complex (also known as the alpha DNA polymerase-primase complex) which plays an essential role in the initiation of DNA synthesis. During the S phase of the cell cycle, the DNA polymerase alpha complex (composed of a catalytic subunit POLA1, a regulatory subunit POLA2 and two primase subunits PRIM1 and PRIM2) is recruited to DNA at the replicative forks via direct interactions with MCM10 and WDHD1. The primase subunit of the polymerase alpha complex initiates DNA synthesis by oligomerising short RNA primers on both leading and lagging strands. These primers are initially extended by the polymerase alpha catalytic subunit and subsequently transferred to polymerase delta and polymerase epsilon for processive synthesis on the lagging and leading strand, respectively. The reason this transfer occurs is because the polymerase alpha has limited processivity and lacks intrinsic 3' exonuclease activity for proofreading error, and therefore is not well suited for replicating long complexes. In the cytosol, responsible for a substantial proportion of the physiological concentration of cytosolic RNA:DNA hybrids, which are necessary to prevent spontaneous activation of type I interferon responses. In Mus musculus (Mouse), this protein is DNA polymerase alpha catalytic subunit (Pola1).